Reading from the N-terminus, the 307-residue chain is Probable deoxyhypusine synthase (307 aa).

Lysine 278 serves as the catalytic Nucleophile.

The protein belongs to the deoxyhypusine synthase family. Requires NAD(+) as cofactor.

The enzyme catalyses [eIF5A protein]-L-lysine + spermidine = [eIF5A protein]-deoxyhypusine + propane-1,3-diamine. It participates in protein modification; eIF5A hypusination. Catalyzes the NAD-dependent oxidative cleavage of spermidine and the subsequent transfer of the butylamine moiety of spermidine to the epsilon-amino group of a specific lysine residue of the eIF-5A precursor protein to form the intermediate deoxyhypusine residue. This chain is Probable deoxyhypusine synthase (dys), found in Methanothermobacter thermautotrophicus (strain ATCC 29096 / DSM 1053 / JCM 10044 / NBRC 100330 / Delta H) (Methanobacterium thermoautotrophicum).